The following is a 211-amino-acid chain: Thymidylate kinase (211 aa).

Position 11 to 18 (11 to 18 (GPDGAGKT)) interacts with ATP.

Belongs to the thymidylate kinase family.

It carries out the reaction dTMP + ATP = dTDP + ADP. Functionally, phosphorylation of dTMP to form dTDP in both de novo and salvage pathways of dTTP synthesis. This Streptococcus pyogenes serotype M49 (strain NZ131) protein is Thymidylate kinase.